Here is a 578-residue protein sequence, read N- to C-terminus: Acyl-coenzyme A synthetase ACSM5, mitochondrial (578 aa).

Residues 1-22 (MRLWLRGLACQALRSSWGVCRI) constitute a mitochondrion transit peptide. K96 bears the N6-acetyllysine; alternate mark. An N6-succinyllysine; alternate modification is found at K96. Position 151 is an N6-acetyllysine (K151). 229–237 (TSGTTGAPK) contributes to the ATP binding site. K302 is modified (N6-acetyllysine; alternate). The residue at position 302 (K302) is an N6-succinyllysine; alternate. Position 335 is an N6-acetyllysine (K335). Residues 367-372 (EGYGQS), D454, R469, and K565 contribute to the ATP site.

It belongs to the ATP-dependent AMP-binding enzyme family. The cofactor is Mg(2+). Mn(2+) is required as a cofactor.

The protein resides in the mitochondrion matrix. It carries out the reaction a medium-chain fatty acid + ATP + CoA = a medium-chain fatty acyl-CoA + AMP + diphosphate. Its function is as follows. Catalyzes the activation of fatty acids by CoA to produce an acyl-CoA, the first step in fatty acid metabolism. In Mus musculus (Mouse), this protein is Acyl-coenzyme A synthetase ACSM5, mitochondrial (Acsm5).